A 236-amino-acid chain; its full sequence is Thylakoid lumenal 17.4 kDa protein, chloroplastic (236 aa).

Pentapeptide repeat domains are found at residues 124-163 (TNLK…SFKG) and 169-208 (AVID…VFED).

In terms of assembly, interacts in vitro with LTO1.

It localises to the plastid. It is found in the chloroplast thylakoid lumen. The chain is Thylakoid lumenal 17.4 kDa protein, chloroplastic from Arabidopsis thaliana (Mouse-ear cress).